The sequence spans 224 residues: Large ribosomal subunit protein uL3 (224 aa).

Position 159 is an N5-methylglutamine (glutamine 159).

The protein belongs to the universal ribosomal protein uL3 family. Part of the 50S ribosomal subunit. Forms a cluster with proteins L14 and L19. Methylated by PrmB.

One of the primary rRNA binding proteins, it binds directly near the 3'-end of the 23S rRNA, where it nucleates assembly of the 50S subunit. The sequence is that of Large ribosomal subunit protein uL3 from Herminiimonas arsenicoxydans.